The following is a 682-amino-acid chain: Potassium-transporting ATPase ATP-binding subunit (682 aa).

4 consecutive transmembrane segments (helical) span residues proline 34–alanine 54, alanine 62–alanine 82, isoleucine 219–leucine 239, and valine 254–isoleucine 274. Aspartate 307 acts as the 4-aspartylphosphate intermediate in catalysis. ATP contacts are provided by residues aspartate 344, glutamate 348, phenylalanine 377–serine 384, and lysine 395. 2 residues coordinate Mg(2+): aspartate 518 and aspartate 522. The next 3 helical transmembrane spans lie at phenylalanine 588–methionine 608, alanine 616–leucine 636, and isoleucine 656–leucine 676.

This sequence belongs to the cation transport ATPase (P-type) (TC 3.A.3) family. Type IA subfamily. In terms of assembly, the system is composed of three essential subunits: KdpA, KdpB and KdpC.

Its subcellular location is the cell inner membrane. The enzyme catalyses K(+)(out) + ATP + H2O = K(+)(in) + ADP + phosphate + H(+). Its function is as follows. Part of the high-affinity ATP-driven potassium transport (or Kdp) system, which catalyzes the hydrolysis of ATP coupled with the electrogenic transport of potassium into the cytoplasm. This subunit is responsible for energy coupling to the transport system and for the release of the potassium ions to the cytoplasm. The polypeptide is Potassium-transporting ATPase ATP-binding subunit (Escherichia coli (strain ATCC 8739 / DSM 1576 / NBRC 3972 / NCIMB 8545 / WDCM 00012 / Crooks)).